The sequence spans 464 residues: 3-isopropylmalate dehydratase large subunit (464 aa).

[4Fe-4S] cluster is bound by residues cysteine 337, cysteine 397, and cysteine 400.

It belongs to the aconitase/IPM isomerase family. LeuC type 1 subfamily. As to quaternary structure, heterodimer of LeuC and LeuD. Requires [4Fe-4S] cluster as cofactor.

It carries out the reaction (2R,3S)-3-isopropylmalate = (2S)-2-isopropylmalate. The protein operates within amino-acid biosynthesis; L-leucine biosynthesis; L-leucine from 3-methyl-2-oxobutanoate: step 2/4. Catalyzes the isomerization between 2-isopropylmalate and 3-isopropylmalate, via the formation of 2-isopropylmaleate. The sequence is that of 3-isopropylmalate dehydratase large subunit from Bacillus thuringiensis subsp. konkukian (strain 97-27).